A 55-amino-acid chain; its full sequence is MPQLNPHPWFSIFITSWLILIIILLPKIKSHIPNNSPTNKKNMLTTPMPWTWPWT.

Residues 4 to 24 (LNPHPWFSIFITSWLILIIIL) form a helical membrane-spanning segment.

It belongs to the ATPase protein 8 family. Component of the ATP synthase complex composed at least of ATP5F1A/subunit alpha, ATP5F1B/subunit beta, ATP5MC1/subunit c (homooctomer), MT-ATP6/subunit a, MT-ATP8/subunit 8, ATP5ME/subunit e, ATP5MF/subunit f, ATP5MG/subunit g, ATP5MK/subunit k, ATP5MJ/subunit j, ATP5F1C/subunit gamma, ATP5F1D/subunit delta, ATP5F1E/subunit epsilon, ATP5PF/subunit F6, ATP5PB/subunit b, ATP5PD/subunit d, ATP5PO/subunit OSCP. ATP synthase complex consists of a soluble F(1) head domain (subunits alpha(3) and beta(3)) - the catalytic core - and a membrane F(0) domain - the membrane proton channel (subunits c, a, 8, e, f, g, k and j). These two domains are linked by a central stalk (subunits gamma, delta, and epsilon) rotating inside the F1 region and a stationary peripheral stalk (subunits F6, b, d, and OSCP).

The protein resides in the mitochondrion membrane. Functionally, subunit 8, of the mitochondrial membrane ATP synthase complex (F(1)F(0) ATP synthase or Complex V) that produces ATP from ADP in the presence of a proton gradient across the membrane which is generated by electron transport complexes of the respiratory chain. ATP synthase complex consist of a soluble F(1) head domain - the catalytic core - and a membrane F(1) domain - the membrane proton channel. These two domains are linked by a central stalk rotating inside the F(1) region and a stationary peripheral stalk. During catalysis, ATP synthesis in the catalytic domain of F(1) is coupled via a rotary mechanism of the central stalk subunits to proton translocation. In vivo, can only synthesize ATP although its ATP hydrolase activity can be activated artificially in vitro. Part of the complex F(0) domain. This is ATP synthase F(0) complex subunit 8 from Pelomedusa subrufa (African side-necked turtle).